We begin with the raw amino-acid sequence, 78 residues long: Large ribosomal subunit protein bL28 (78 aa).

It belongs to the bacterial ribosomal protein bL28 family.

The sequence is that of Large ribosomal subunit protein bL28 from Corynebacterium aurimucosum (strain ATCC 700975 / DSM 44827 / CIP 107346 / CN-1) (Corynebacterium nigricans).